Here is a 148-residue protein sequence, read N- to C-terminus: 6,7-dimethyl-8-ribityllumazine synthase (148 aa).

5-amino-6-(D-ribitylamino)uracil contacts are provided by residues F13, 44 to 46 (ALE), and 73 to 75 (MVI). 78-79 (ET) serves as a coordination point for (2S)-2-hydroxy-3-oxobutyl phosphate. Catalysis depends on H81, which acts as the Proton donor. N106 is a 5-amino-6-(D-ribitylamino)uracil binding site. R120 lines the (2S)-2-hydroxy-3-oxobutyl phosphate pocket.

The protein belongs to the DMRL synthase family.

It carries out the reaction (2S)-2-hydroxy-3-oxobutyl phosphate + 5-amino-6-(D-ribitylamino)uracil = 6,7-dimethyl-8-(1-D-ribityl)lumazine + phosphate + 2 H2O + H(+). The protein operates within cofactor biosynthesis; riboflavin biosynthesis; riboflavin from 2-hydroxy-3-oxobutyl phosphate and 5-amino-6-(D-ribitylamino)uracil: step 1/2. Catalyzes the formation of 6,7-dimethyl-8-ribityllumazine by condensation of 5-amino-6-(D-ribitylamino)uracil with 3,4-dihydroxy-2-butanone 4-phosphate. This is the penultimate step in the biosynthesis of riboflavin. The polypeptide is 6,7-dimethyl-8-ribityllumazine synthase (Agrobacterium fabrum (strain C58 / ATCC 33970) (Agrobacterium tumefaciens (strain C58))).